The primary structure comprises 464 residues: Spore coat protein SP65 (464 aa).

The first 17 residues, 1–17 (MKVLLLLVCLVFAYVNA), serve as a signal peptide directing secretion. Positions 21–43 (ACYNVVCPSNYQCRAEGDQAYCV) constitute a Follistatin-like 1 domain. N-linked (GlcNAc...) asparagine glycosylation is present at Asn111. 2 consecutive Follistatin-like domains span residues 121 to 143 (VCRDFQCPVGTHCFNGERGPHCV) and 151 to 173 (LCRVTKCSYDFTCKMVRGNPTCL). Asn247 carries N-linked (GlcNAc...) asparagine glycosylation. Residues 250–320 (STTGATTGAT…STTGAATTAP (71 aa)) form a disordered region.

In terms of assembly, binds to the C-terminal region of pspB.

It localises to the spore wall. Its function is as follows. Forms a triad with cellulose and pspB that is essential for spore outer layer formation. In Dictyostelium discoideum (Social amoeba), this protein is Spore coat protein SP65 (cotE).